A 119-amino-acid chain; its full sequence is Holo-[acyl-carrier-protein] synthase (119 aa).

Residues D8 and E58 each coordinate Mg(2+).

It belongs to the P-Pant transferase superfamily. AcpS family. It depends on Mg(2+) as a cofactor.

The protein resides in the cytoplasm. The catalysed reaction is apo-[ACP] + CoA = holo-[ACP] + adenosine 3',5'-bisphosphate + H(+). Transfers the 4'-phosphopantetheine moiety from coenzyme A to a Ser of acyl-carrier-protein. The protein is Holo-[acyl-carrier-protein] synthase of Bacillus mycoides (strain KBAB4) (Bacillus weihenstephanensis).